Here is a 42-residue protein sequence, read N- to C-terminus: uncharacterized protein (42 aa).

This is an uncharacterized protein from Saccharomyces cerevisiae (strain ATCC 204508 / S288c) (Baker's yeast).